A 120-amino-acid chain; its full sequence is Phosphoribosyl-AMP cyclohydrolase (120 aa).

Aspartate 75 contributes to the Mg(2+) binding site. Cysteine 76 serves as a coordination point for Zn(2+). Aspartate 77 and aspartate 79 together coordinate Mg(2+). Zn(2+)-binding residues include cysteine 92 and cysteine 99.

This sequence belongs to the PRA-CH family. In terms of assembly, homodimer. Mg(2+) serves as cofactor. The cofactor is Zn(2+).

It is found in the cytoplasm. The catalysed reaction is 1-(5-phospho-beta-D-ribosyl)-5'-AMP + H2O = 1-(5-phospho-beta-D-ribosyl)-5-[(5-phospho-beta-D-ribosylamino)methylideneamino]imidazole-4-carboxamide. It participates in amino-acid biosynthesis; L-histidine biosynthesis; L-histidine from 5-phospho-alpha-D-ribose 1-diphosphate: step 3/9. Its function is as follows. Catalyzes the hydrolysis of the adenine ring of phosphoribosyl-AMP. The protein is Phosphoribosyl-AMP cyclohydrolase of Haloarcula marismortui (strain ATCC 43049 / DSM 3752 / JCM 8966 / VKM B-1809) (Halobacterium marismortui).